The following is a 120-amino-acid chain: Succinate dehydrogenase membrane anchor subunit (120 aa).

The Mitochondrial matrix segment spans residues 1–17 (MTEKLLHFIRTKSGSMH). Residues 18–38 (WWLQRFLAILLAPIILYLLFD) form a helical membrane-spanning segment. Residues 39–63 (VAIYIGQQSDPTVMMFLNRIFNHNS) are Mitochondrial intermembrane-facing. Residues 64 to 85 (IFIFITSVILIWHVRGGMEVII) traverse the membrane as a helical segment. Residue His-76 participates in heme binding. The Mitochondrial matrix portion of the chain corresponds to 86–95 (EDYVHGEKTR). Tyr-88 provides a ligand contact to a ubiquinone. A helical transmembrane segment spans residues 96–120 (IVSIFLIRVIAIEIMEYLYKCSIIF).

In terms of assembly, part of an enzyme complex containing four subunits: a flavoprotein, an iron-sulfur protein, plus two membrane-anchoring proteins. It depends on heme as a cofactor.

It is found in the mitochondrion inner membrane. It participates in carbohydrate metabolism; tricarboxylic acid cycle. Membrane-anchoring subunit of succinate dehydrogenase (SDH). In Reclinomonas americana, this protein is Succinate dehydrogenase membrane anchor subunit (SDH4).